A 930-amino-acid chain; its full sequence is Translation initiation factor IF-2 (930 aa).

Disordered regions lie at residues 160–179 (EPVE…FTDG) and 208–301 (AKRA…AAAP). Residues 208 to 227 (AKRAAEEAKRTQPRAEKPAD) are compositionally biased toward basic and acidic residues. Basic residues-rich tracts occupy residues 263–272 (GHGHKKHHHG) and 288–301 (KRGA…AAAP). Positions 431 to 600 (TRAPVVTVMG…SLQAEVLELT (170 aa)) constitute a tr-type G domain. The interval 440 to 447 (GHVDHGKT) is G1. 440–447 (GHVDHGKT) lines the GTP pocket. A G2 region spans residues 465-469 (GITQH). The interval 486 to 489 (DTPG) is G3. GTP is bound by residues 486–490 (DTPGH) and 540–543 (NKCD). Residues 540–543 (NKCD) form a G4 region. The G5 stretch occupies residues 576–578 (SAH).

The protein belongs to the TRAFAC class translation factor GTPase superfamily. Classic translation factor GTPase family. IF-2 subfamily.

The protein resides in the cytoplasm. One of the essential components for the initiation of protein synthesis. Protects formylmethionyl-tRNA from spontaneous hydrolysis and promotes its binding to the 30S ribosomal subunits. Also involved in the hydrolysis of GTP during the formation of the 70S ribosomal complex. This chain is Translation initiation factor IF-2, found in Cellvibrio japonicus (strain Ueda107) (Pseudomonas fluorescens subsp. cellulosa).